The primary structure comprises 843 residues: Protein P (843 aa).

The segment at 1-177 (MPLSYQHFRK…FCGSPYSWEQ (177 aa)) is terminal protein domain (TP). The segment at 178 to 346 (ELQHGRLFFK…YCLSHIVNLL (169 aa)) is spacer. Residues 248–272 (HPTTRQSFGVEPSGSGHIDNSASNS) form a disordered region. Residues 347–690 (EDWGPCTENG…YLNLYPVARQ (344 aa)) form a polymerase/reverse transcriptase domain (RT) region. The region spanning 357–600 (EHNIRIPRTP…YSLNFMGYVI (244 aa)) is the Reverse transcriptase domain. Mg(2+)-binding residues include Asp429, Asp551, and Asp552.

The protein belongs to the hepadnaviridae P protein family.

The enzyme catalyses DNA(n) + a 2'-deoxyribonucleoside 5'-triphosphate = DNA(n+1) + diphosphate. It catalyses the reaction Endonucleolytic cleavage to 5'-phosphomonoester.. Activated by host HSP70 and HSP40 in vitro to be able to bind the epsilon loop of the pgRNA. Because deletion of the RNase H region renders the protein partly chaperone-independent, the chaperones may be needed indirectly to relieve occlusion of the RNA-binding site by this domain. Inhibited by several reverse-transcriptase inhibitors: Lamivudine, Adefovir and Entecavir. In terms of biological role, multifunctional enzyme that converts the viral RNA genome into dsDNA in viral cytoplasmic capsids. This enzyme displays a DNA polymerase activity that can copy either DNA or RNA templates, and a ribonuclease H (RNase H) activity that cleaves the RNA strand of RNA-DNA heteroduplexes in a partially processive 3'- to 5'-endonucleasic mode. Neo-synthesized pregenomic RNA (pgRNA) are encapsidated together with the P protein, and reverse-transcribed inside the nucleocapsid. Initiation of reverse-transcription occurs first by binding the epsilon loop on the pgRNA genome, and is initiated by protein priming, thereby the 5'-end of (-)DNA is covalently linked to P protein. Partial (+)DNA is synthesized from the (-)DNA template and generates the relaxed circular DNA (RC-DNA) genome. After budding and infection, the RC-DNA migrates in the nucleus, and is converted into a plasmid-like covalently closed circular DNA (cccDNA). The activity of P protein does not seem to be necessary for cccDNA generation, and is presumably released from (+)DNA by host nuclear DNA repair machinery. The chain is Protein P from Homo sapiens (Human).